A 300-amino-acid polypeptide reads, in one-letter code: 7-methylguanosine phosphate-specific 5'-nucleotidase (300 aa).

Catalysis depends on D41, which acts as the Nucleophile. The Mg(2+) site is built by D41 and D43. D43 (proton donor) is an active-site residue. E88 lines the CMP pocket. E88 contacts N(7)-methyl-GMP. Residues 156-157 and K205 each bind substrate; that span reads SA. D230 contacts Mg(2+). At K256 the chain carries N6-acetyllysine.

This sequence belongs to the pyrimidine 5'-nucleotidase family. Monomer.

Its subcellular location is the cytoplasm. It carries out the reaction N(7)-methyl-GMP + H2O = N(7)-methylguanosine + phosphate. It catalyses the reaction CMP + H2O = cytidine + phosphate. The catalysed reaction is a ribonucleoside 5'-phosphate + H2O = a ribonucleoside + phosphate. Functionally, specifically hydrolyzes 7-methylguanosine monophosphate (m(7)GMP) to 7-methylguanosine and inorganic phosphate. The specific activity for m(7)GMP may protect cells against undesired salvage of m(7)GMP and its incorporation into nucleic acids. Also has weak activity for CMP. UMP and purine nucleotides are poor substrates. This chain is 7-methylguanosine phosphate-specific 5'-nucleotidase (Nt5c3b), found in Rattus norvegicus (Rat).